The chain runs to 196 residues: Nodulation protein A (196 aa).

This sequence belongs to the NodA family.

The protein localises to the cytoplasm. N-acyltransferase required for nodulation. Acts in the production of a small, heat-stable compound (Nod) that stimulates mitosis in various plant protoplasts. In Mesorhizobium sp. (strain 7653R), this protein is Nodulation protein A.